The following is a 965-amino-acid chain: Iron-responsive element-binding protein 2 (965 aa).

The interval 142-170 (NAPNPGGGEAQKPTAKLSPLKGQPRKLPC) is disordered. [4Fe-4S] cluster-binding residues include Cys-514, Cys-580, and Cys-583.

The protein belongs to the aconitase/IPM isomerase family. It depends on [4Fe-4S] cluster as a cofactor. In terms of processing, ubiquitinated and degraded by the proteasome in presence of high level of iron and oxygen.

The protein resides in the cytoplasm. In terms of biological role, RNA-binding protein that binds to iron-responsive elements (IRES), which are stem-loop structures found in the 5'-UTR of ferritin, and delta aminolevulinic acid synthase mRNAs, and in the 3'-UTR of transferrin receptor mRNA. Binding to the IRE element in ferritin results in the repression of its mRNA translation. Binding of the protein to the transferrin receptor mRNA inhibits the degradation of this otherwise rapidly degraded mRNA. The protein is Iron-responsive element-binding protein 2 (IREB2) of Gallus gallus (Chicken).